Here is a 161-residue protein sequence, read N- to C-terminus: MEYNTSELCDLFADSVDVVDPIFASFGGRYSFGGEITTVKCFEDRGLIDRVLAQPGAGKVLLIDGGGSSRRALFDASSAQVAIDNDWEGVVIYGSVREVDSLAELDIGVLAVAAIPVNAECESVGEVDLPVNFGGVTFLPEDHLYADSTGVILSPEPLDLD.

Belongs to the RraA family. As to quaternary structure, homotrimer. Binds to both RNA-binding sites in the C-terminal region of Rne and to RhlB.

The protein resides in the cytoplasm. Its function is as follows. Globally modulates RNA abundance by binding to RNase E (Rne) and regulating its endonucleolytic activity. Can modulate Rne action in a substrate-dependent manner by altering the composition of the degradosome. Modulates RNA-binding and helicase activities of the degradosome. This chain is Regulator of ribonuclease activity A, found in Alteromonas mediterranea (strain DSM 17117 / CIP 110805 / LMG 28347 / Deep ecotype).